An 85-amino-acid chain; its full sequence is Large ribosomal subunit protein bL27 (85 aa).

This sequence belongs to the bacterial ribosomal protein bL27 family.

This Campylobacter fetus subsp. fetus (strain 82-40) protein is Large ribosomal subunit protein bL27.